Here is a 160-residue protein sequence, read N- to C-terminus: Ribosomal RNA large subunit methyltransferase H (160 aa).

S-adenosyl-L-methionine-binding positions include Leu76, Gly108, and 127–132; that span reads LGKMTW.

This sequence belongs to the RNA methyltransferase RlmH family. As to quaternary structure, homodimer.

Its subcellular location is the cytoplasm. It catalyses the reaction pseudouridine(1915) in 23S rRNA + S-adenosyl-L-methionine = N(3)-methylpseudouridine(1915) in 23S rRNA + S-adenosyl-L-homocysteine + H(+). Specifically methylates the pseudouridine at position 1915 (m3Psi1915) in 23S rRNA. The polypeptide is Ribosomal RNA large subunit methyltransferase H (Rhizobium etli (strain CIAT 652)).